A 93-amino-acid polypeptide reads, in one-letter code: Cell division protein FtsB (93 aa).

At 1 to 3 (MRV) the chain is on the cytoplasmic side. The chain crosses the membrane as a helical span at residues 4-21 (TLVVLLALFLALQYRLWF). Over 22–93 (GKNSLPDYWR…FFRLVPDRNP (72 aa)) the chain is Periplasmic. Residues 28–75 (DYWRLQQEVSNQKNTNENLERRNQLIYADIEDLREGEDALEERARNEL) adopt a coiled-coil conformation.

It belongs to the FtsB family. As to quaternary structure, part of a complex composed of FtsB, FtsL and FtsQ.

The protein resides in the cell inner membrane. Essential cell division protein. May link together the upstream cell division proteins, which are predominantly cytoplasmic, with the downstream cell division proteins, which are predominantly periplasmic. The chain is Cell division protein FtsB from Idiomarina loihiensis (strain ATCC BAA-735 / DSM 15497 / L2-TR).